We begin with the raw amino-acid sequence, 215 residues long: Large ribosomal subunit protein uL1 (215 aa).

This sequence belongs to the universal ribosomal protein uL1 family. As to quaternary structure, part of the 50S ribosomal subunit.

Its function is as follows. Binds directly to 23S rRNA. Probably involved in E site tRNA release. In terms of biological role, protein L1 is also a translational repressor protein, it controls the translation of its operon by binding to its mRNA. This is Large ribosomal subunit protein uL1 from Staphylothermus marinus (strain ATCC 43588 / DSM 3639 / JCM 9404 / F1).